A 510-amino-acid chain; its full sequence is UDP-N-acetylmuramoylalanine--D-glutamate ligase (510 aa).

Position 138 to 144 (138 to 144 (GTNGKTT)) interacts with ATP. The interval 294-316 (FDEPAPAPRRKKDAPPPTRAGGR) is disordered.

The protein belongs to the MurCDEF family.

It is found in the cytoplasm. The catalysed reaction is UDP-N-acetyl-alpha-D-muramoyl-L-alanine + D-glutamate + ATP = UDP-N-acetyl-alpha-D-muramoyl-L-alanyl-D-glutamate + ADP + phosphate + H(+). Its pathway is cell wall biogenesis; peptidoglycan biosynthesis. In terms of biological role, cell wall formation. Catalyzes the addition of glutamate to the nucleotide precursor UDP-N-acetylmuramoyl-L-alanine (UMA). This Bordetella bronchiseptica (strain ATCC BAA-588 / NCTC 13252 / RB50) (Alcaligenes bronchisepticus) protein is UDP-N-acetylmuramoylalanine--D-glutamate ligase.